A 79-amino-acid polypeptide reads, in one-letter code: Serine rich endogenous peptide 2 (79 aa).

Residues 1–19 (MANNLGLVILLLVIVLVSC) form the signal peptide. Residues 25-79 (CALASPQKSRPSSEWRRKLIPVRSSRSPRSPSFAPKKPPPPPPSPPLSPSSPPSN) are disordered. Positions 45–57 (PVRSSRSPRSPSF) match the SCOOP motif motif. Residues 45–59 (PVRSSRSPRSPSFAP) show a composition bias toward low complexity. The SxS motif essential for MIK2 binding signature appears at 49–51 (SRS). Positions 60-79 (KKPPPPPPSPPLSPSSPPSN) are enriched in pro residues.

The protein belongs to the serine rich endogenous peptide (SCOOP) phytocytokine family. Interacts with MIK2 (via extracellular leucine-rich repeat domain); this interaction triggers the formation of complex between MIK2 and the BAK1/SERK3 and SERK4 coreceptors, and subsequent BAK1 activation by phosphorylation.

It is found in the cell membrane. Its subcellular location is the secreted. It localises to the extracellular space. The protein resides in the apoplast. Brassicaceae-specific phytocytokine (plant endogenous peptide released into the apoplast) perceived by MIK2 in a BAK1/SERK3 and SERK4 coreceptors-dependent manner, that modulates various physiological and antimicrobial processes including growth prevention and reactive oxygen species (ROS) response regulation. The polypeptide is Serine rich endogenous peptide 2 (Arabidopsis thaliana (Mouse-ear cress)).